Consider the following 290-residue polypeptide: Phycobilisome 32.3 kDa linker polypeptide, phycocyanin-associated, rod (290 aa).

Residues 1-179 enclose the PBS-linker domain; sequence MPVTVAASRL…LQRGYANSDR (179 aa). The CpcD-like domain occupies 236–288; that stretch reads DQVVRVEVAALSTPRYPRIRRSSRVFFVPVSRLSQKLQEIQRMGGRVASISPA.

Belongs to the phycobilisome linker protein family.

It localises to the cellular thylakoid membrane. Functionally, rod linker protein, associated with phycocyanin. Linker polypeptides determine the state of aggregation and the location of the disk-shaped phycobiliprotein units within the phycobilisome and modulate their spectroscopic properties in order to mediate a directed and optimal energy transfer. The sequence is that of Phycobilisome 32.3 kDa linker polypeptide, phycocyanin-associated, rod (cpcC) from Picosynechococcus sp. (strain ATCC 27264 / PCC 7002 / PR-6) (Agmenellum quadruplicatum).